The following is a 104-amino-acid chain: Ig kappa chain b5 variant C region (104 aa).

The Ig-like domain maps to 5-100 (PTVLIFPPSP…SGSPVVQSFS (96 aa)). Cys-26 and Cys-85 form a disulfide bridge.

The polypeptide is Ig kappa chain b5 variant C region (Oryctolagus cuniculus (Rabbit)).